A 1296-amino-acid chain; its full sequence is DNA-directed RNA polymerase subunit beta' (1296 aa).

Residues Cys60, Cys62, Cys75, and Cys78 each contribute to the Zn(2+) site. Positions 535, 537, and 539 each coordinate Mg(2+). Zn(2+)-binding residues include Cys877, Cys954, Cys961, and Cys964.

Belongs to the RNA polymerase beta' chain family. The RNAP catalytic core consists of 2 alpha, 1 beta, 1 beta' and 1 omega subunit. When a sigma factor is associated with the core the holoenzyme is formed, which can initiate transcription. Requires Mg(2+) as cofactor. Zn(2+) is required as a cofactor.

The enzyme catalyses RNA(n) + a ribonucleoside 5'-triphosphate = RNA(n+1) + diphosphate. Functionally, DNA-dependent RNA polymerase catalyzes the transcription of DNA into RNA using the four ribonucleoside triphosphates as substrates. In Beutenbergia cavernae (strain ATCC BAA-8 / DSM 12333 / CCUG 43141 / JCM 11478 / NBRC 16432 / NCIMB 13614 / HKI 0122), this protein is DNA-directed RNA polymerase subunit beta'.